A 247-amino-acid polypeptide reads, in one-letter code: Protein NipSnap homolog 3B (247 aa).

N6-succinyllysine occurs at positions 45, 48, 57, and 166.

This sequence belongs to the NipSnap family.

Its subcellular location is the cytoplasm. The protein resides in the cytosol. The sequence is that of Protein NipSnap homolog 3B (Nipsnap3b) from Mus musculus (Mouse).